Consider the following 100-residue polypeptide: MSLALSDVKRLSMLAQIDLTDAQSAQTLDKLNGIFALVEQLSAVDTTGVEPLNHPIAALLPDLSLRLRDDVVSEPNRRDDYQQVAPATQDGLYLVPKVIE.

This sequence belongs to the GatC family. In terms of assembly, heterotrimer of A, B and C subunits.

It catalyses the reaction L-glutamyl-tRNA(Gln) + L-glutamine + ATP + H2O = L-glutaminyl-tRNA(Gln) + L-glutamate + ADP + phosphate + H(+). It carries out the reaction L-aspartyl-tRNA(Asn) + L-glutamine + ATP + H2O = L-asparaginyl-tRNA(Asn) + L-glutamate + ADP + phosphate + 2 H(+). Its function is as follows. Allows the formation of correctly charged Asn-tRNA(Asn) or Gln-tRNA(Gln) through the transamidation of misacylated Asp-tRNA(Asn) or Glu-tRNA(Gln) in organisms which lack either or both of asparaginyl-tRNA or glutaminyl-tRNA synthetases. The reaction takes place in the presence of glutamine and ATP through an activated phospho-Asp-tRNA(Asn) or phospho-Glu-tRNA(Gln). This is Aspartyl/glutamyl-tRNA(Asn/Gln) amidotransferase subunit C from Herminiimonas arsenicoxydans.